A 521-amino-acid polypeptide reads, in one-letter code: 56 kDa type-specific antigen (521 aa).

The first 22 residues, M1–A22, serve as a signal peptide directing secretion. A helical membrane pass occupies residues L64–V86. Residues L386–K415 form a disordered region. Residues C396–K415 show a composition bias toward basic and acidic residues. Residues T469–A484 form a helical membrane-spanning segment.

Its subcellular location is the cell membrane. Functionally, may be an adherent factor for rickettsial adsorption to the host-cell surface and a determinant of virulence of individual rickettsial strain. It is the major outer membrane protein. This Orientia tsutsugamushi (Rickettsia tsutsugamushi) protein is 56 kDa type-specific antigen.